The chain runs to 367 residues: Phosphoribosylaminoimidazole-succinocarboxamide synthase (367 aa).

Belongs to the SAICAR synthetase family.

It carries out the reaction 5-amino-1-(5-phospho-D-ribosyl)imidazole-4-carboxylate + L-aspartate + ATP = (2S)-2-[5-amino-1-(5-phospho-beta-D-ribosyl)imidazole-4-carboxamido]succinate + ADP + phosphate + 2 H(+). It participates in purine metabolism; IMP biosynthesis via de novo pathway; 5-amino-1-(5-phospho-D-ribosyl)imidazole-4-carboxamide from 5-amino-1-(5-phospho-D-ribosyl)imidazole-4-carboxylate: step 1/2. The protein is Phosphoribosylaminoimidazole-succinocarboxamide synthase of Aliivibrio fischeri (strain MJ11) (Vibrio fischeri).